We begin with the raw amino-acid sequence, 322 residues long: Ribosomal RNA small subunit methyltransferase H (322 aa).

S-adenosyl-L-methionine contacts are provided by residues 43–45, aspartate 60, phenylalanine 86, aspartate 104, and glutamine 111; that span reads GGY.

Belongs to the methyltransferase superfamily. RsmH family.

Its subcellular location is the cytoplasm. It catalyses the reaction cytidine(1402) in 16S rRNA + S-adenosyl-L-methionine = N(4)-methylcytidine(1402) in 16S rRNA + S-adenosyl-L-homocysteine + H(+). Functionally, specifically methylates the N4 position of cytidine in position 1402 (C1402) of 16S rRNA. This Caulobacter sp. (strain K31) protein is Ribosomal RNA small subunit methyltransferase H.